Here is a 235-residue protein sequence, read N- to C-terminus: ATP synthase subunit a (235 aa).

Helical transmembrane passes span 17 to 37 (TTNI…LYGM), 76 to 96 (SFFA…GLIF), 113 to 133 (PVVT…AGVA), 179 to 201 (LLMS…PGLF), and 211 to 230 (VFIG…VYIS).

The protein belongs to the ATPase A chain family. In terms of assembly, F-type ATPases have 2 components, CF(1) - the catalytic core - and CF(0) - the membrane proton channel. CF(1) has five subunits: alpha(3), beta(3), gamma(1), delta(1), epsilon(1). CF(0) has three main subunits: a(1), b(2) and c(9-12). The alpha and beta chains form an alternating ring which encloses part of the gamma chain. CF(1) is attached to CF(0) by a central stalk formed by the gamma and epsilon chains, while a peripheral stalk is formed by the delta and b chains.

The protein localises to the cell membrane. In terms of biological role, key component of the proton channel; it plays a direct role in the translocation of protons across the membrane. The protein is ATP synthase subunit a of Limosilactobacillus reuteri subsp. reuteri (strain JCM 1112) (Lactobacillus reuteri).